A 207-amino-acid chain; its full sequence is Peptidyl-tRNA hydrolase (207 aa).

Tyrosine 30 serves as a coordination point for tRNA. Residue histidine 35 is the Proton acceptor of the active site. TRNA-binding residues include tyrosine 81, asparagine 83, and asparagine 129.

It belongs to the PTH family. In terms of assembly, monomer.

It is found in the cytoplasm. It catalyses the reaction an N-acyl-L-alpha-aminoacyl-tRNA + H2O = an N-acyl-L-amino acid + a tRNA + H(+). In terms of biological role, hydrolyzes ribosome-free peptidyl-tRNAs (with 1 or more amino acids incorporated), which drop off the ribosome during protein synthesis, or as a result of ribosome stalling. Catalyzes the release of premature peptidyl moieties from peptidyl-tRNA molecules trapped in stalled 50S ribosomal subunits, and thus maintains levels of free tRNAs and 50S ribosomes. The polypeptide is Peptidyl-tRNA hydrolase (Bordetella avium (strain 197N)).